We begin with the raw amino-acid sequence, 1562 residues long: Cell surface antigen I/II (1562 aa).

Positions 1–38 are cleaved as a signal peptide; the sequence is MKVKKTYGFRKSKISKTLCGAVLGTVAAVSVAGQKVFA. Residues 42 to 54 show a composition bias toward low complexity; that stretch reads TTTSDVDTKVVGT. Residues 42 to 91 form a disordered region; that stretch reads TTTSDVDTKVVGTQTGNPATNLPEAQGSASKEAEQSQNQAGETNGSIPVE. Residues 60–551 form a helical region; the sequence is ATNLPEAQGS…SKAKYDQKIL (492 aa). A compositionally biased stretch (polar residues) spans 76–87; sequence QSQNQAGETNGS. 4 Ag I/II A repeats span residues 147–221, 222–303, 304–385, and 386–467; these read KKTT…QKTN, AANQ…QEAN, AANE…KKAN, and AANE…QKDL. 2 disordered regions span residues 824 to 973 and 1482 to 1509; these read VPKV…PTDP and SNTV…RTST. Residues 943–958 show a composition bias toward pro residues; it reads PTPPTPTPDQPEPNKP. The span at 1500–1509 shows a compositional bias: low complexity; the sequence is QDPSSPRTST. Residues 1529–1533 carry the LPXTG sorting signal motif; the sequence is LPNTG. Threonine 1532 carries the post-translational modification Pentaglycyl murein peptidoglycan amidated threonine. Residues 1533 to 1562 constitute a propeptide, removed by sortase; sequence GVTNNAYMPLLGIIGLVTSFSLLGLKAKKD.

This sequence belongs to the antigen I/II family. In terms of processing, detected as a 185 kDa cell surface protein, but also as 2 proteins in S.mutans culture supernatants of about 150 kDa (antigen I) and 50 kDa (antigen II); antigen II is only seen after proteolysis. Antigen I and II have the same N-terminus but different C-termini.

It localises to the secreted. The protein localises to the cell wall. Its function is as follows. Surface protein antigen implicated in dental caries. The protein is Cell surface antigen I/II of Streptococcus mutans serotype c (strain ATCC 700610 / UA159).